The primary structure comprises 244 residues: uncharacterized protein (244 aa).

This is an uncharacterized protein from Ostreid herpesvirus 1 (isolate France) (OsHV-1).